The primary structure comprises 1180 residues: Polyamine-transporting ATPase 13A2 (1180 aa).

Over 1–44 (MSADSSPLVGSTPTGYGTLTIGTSIDPLSSSVSSVRLSGYCGSP) the chain is Cytoplasmic. The stretch at 45 to 65 (WRVIGYHVVVWMMAGIPLLLF) is an intramembrane region. Over 66–235 (RWKPLWGVRL…KSYPQLLVDE (170 aa)) the chain is Cytoplasmic. Serine 151 carries the post-translational modification Phosphoserine. The helical transmembrane segment at 236–253 (ALNPYYGFQAFSIALWLA) threads the bilayer. Residues 254–256 (DHY) lie on the Lumenal side of the membrane. Residues 257-276 (YWYALCIFLISSISICLSLY) form a helical membrane-spanning segment. Over 277–427 (KTRKQSQTLR…NFKFYKHSMK (151 aa)) the chain is Cytoplasmic. Residues 428 to 448 (FVAALSVLALLGTIYSIFILY) traverse the membrane as a helical segment. At 449 to 463 (RNRVPLNEIVIRALD) the chain is on the lumenal side. The helical transmembrane segment at 464–484 (LVTVVVPPALPAAMTVCTLYA) threads the bilayer. Residues 485–930 (QSRLRRQGIF…REGRCSLDTS (446 aa)) lie on the Cytoplasmic side of the membrane. The 4-aspartylphosphate intermediate role is filled by aspartate 513. Mg(2+)-binding residues include aspartate 878 and aspartate 882. A helical membrane pass occupies residues 931 to 951 (FSVFKYMALYSLTQFISVLIL). Residues 952–957 (YTINTN) lie on the Lumenal side of the membrane. Residues 958-978 (LGDLQFLAIDLVITTTVAVLM) form a helical membrane-spanning segment. Topologically, residues 979 to 994 (SRTGPALVLGRVRPPG) are cytoplasmic. A helical membrane pass occupies residues 995 to 1015 (ALLSVPVLSSLLLQMVLVTGV). Residues 1016–1048 (QLGGYFLTLAQPWFVPLNRTVAAPDNLPNYENT) lie on the Lumenal side of the membrane. Asparagine 1033 carries N-linked (GlcNAc...) asparagine glycosylation. The chain crosses the membrane as a helical span at residues 1049-1069 (VVFSLSSFQYLILAAAVSKGA). Topologically, residues 1070-1080 (PFRRPLYTNVP) are cytoplasmic. Residues 1081–1101 (FLVALALLSSVLVGLVLVPGL) form a helical membrane-spanning segment. Topologically, residues 1102–1117 (LQGPLALRNITDTGFK) are lumenal. A glycan (N-linked (GlcNAc...) asparagine) is linked at asparagine 1110. A helical transmembrane segment spans residues 1118-1138 (LLLLGLVTLNFVGAFMLESVL). Residues 1139–1180 (DQCLPACLRRLRPKRASKKRFKQLERELAEQPWPPLPAGPLR) are Cytoplasmic-facing.

It belongs to the cation transport ATPase (P-type) (TC 3.A.3) family. Type V subfamily. Interacts with MYCBP2; the interaction inhibits the ubiquitination of TSC2 by MYCBP2. Interacts with HDAC6; the interaction results in recruitment of HDAC6 to lysosomes to promote CTTN deacetylation. Autophosphorylated. Accumulates in an inactive autophosphorylated state and autophosphorylation is stimulated by phosphatidic acid and phosphatidylinositol 3,5-bisphosphate but not by Mn(2+) or Zn(2+). The presence of spermine results in a dose-dependent reduction in autophosphorylation. Expressed in brain; protein levels are markedly increased in brain from subjects with Parkinson disease and subjects with dementia with Lewy bodies. Detected in pyramidal neurons located throughout the cingulate cortex (at protein level). In the substantia nigra, it is found in neuromelanin-positive dopaminergic neurons (at protein level).

It is found in the lysosome membrane. The protein localises to the late endosome membrane. The protein resides in the endosome. It localises to the multivesicular body membrane. Its subcellular location is the cytoplasmic vesicle. It is found in the autophagosome membrane. It catalyses the reaction spermidine(out) + ATP + H2O = spermidine(in) + ADP + phosphate + H(+). It carries out the reaction spermine(out) + ATP + H2O = spermine(in) + ADP + phosphate + H(+). Accumulates in an inactive autophosphorylated state. The presence of spermine results in a dose-dependent reduction in autophosphorylation. ATPase which acts as a lysosomal polyamine exporter with high affinity for spermine. Also stimulates cellular uptake of polyamines and protects against polyamine toxicity. Plays a role in intracellular cation homeostasis and the maintenance of neuronal integrity. Contributes to cellular zinc homeostasis. Confers cellular protection against Mn(2+) and Zn(2+) toxicity and mitochondrial stress. Required for proper lysosomal and mitochondrial maintenance. Regulates the autophagy-lysosome pathway through the control of SYT11 expression at both transcriptional and post-translational levels. Facilitates recruitment of deacetylase HDAC6 to lysosomes to deacetylate CTTN, leading to actin polymerization, promotion of autophagosome-lysosome fusion and completion of autophagy. Promotes secretion of exosomes as well as secretion of SCNA via exosomes. Plays a role in lipid homeostasis. This is Polyamine-transporting ATPase 13A2 from Homo sapiens (Human).